Here is a 465-residue protein sequence, read N- to C-terminus: MSNTIQPEALTFECETGNYHTFCPISCVSWLYQKIEDSFFLVIGTKTCGYFLQNAMGVMIFAEPRYAMAELEEGDISAKLNDYNELKRLCLQIKRDRNPSVIVWIGTCTTEIIKMDLEGLAPKLESEIGIPIVVARANGLDYAFTQGEDTVLAAMAARCPKQVLEVEKEAKNGIQKLLSFGRKKEEVAAEKSEYVNHPPLILFGSLPDPVVTQLTLELKKQGIKVSGWLPAKHYTELPVIEEGYYVAGVNPFLSRTATTLMRRRKCKLIGAPFPIGPDGSKAWIEKICSVFGIEPQGLVEREEQIWNNLEDYIQLIRGKSVFFMGDNLLEISLARFLIRCGMTCPEIGIPYMDKRYQKAELEMLEKTCQEMGVRLPKIIEKPDNYNQIQRIYELQPDLVITGMAHANPLEARGINTKWSVEFTFAQIHGFTNARDILELVTRPLRRNNALKDLGWDKLVKEEAKV.

Residues Cys-23, Cys-48, and Cys-108 each contribute to the [4Fe-4S] cluster site.

Belongs to the BchN/ChlN family. As to quaternary structure, protochlorophyllide reductase is composed of three subunits; ChlL, ChlN and ChlB. Forms a heterotetramer of two ChlB and two ChlN subunits. [4Fe-4S] cluster serves as cofactor.

It carries out the reaction chlorophyllide a + oxidized 2[4Fe-4S]-[ferredoxin] + 2 ADP + 2 phosphate = protochlorophyllide a + reduced 2[4Fe-4S]-[ferredoxin] + 2 ATP + 2 H2O. The protein operates within porphyrin-containing compound metabolism; chlorophyll biosynthesis (light-independent). Functionally, component of the dark-operative protochlorophyllide reductase (DPOR) that uses Mg-ATP and reduced ferredoxin to reduce ring D of protochlorophyllide (Pchlide) to form chlorophyllide a (Chlide). This reaction is light-independent. The NB-protein (ChlN-ChlB) is the catalytic component of the complex. The chain is Light-independent protochlorophyllide reductase subunit N from Trichodesmium erythraeum (strain IMS101).